A 418-amino-acid polypeptide reads, in one-letter code: ORC1-type DNA replication protein 2 (418 aa).

ATP-binding positions include Thr72–Val76, Tyr218, and Arg230.

Belongs to the CDC6/cdc18 family.

In terms of biological role, involved in regulation of DNA replication. The protein is ORC1-type DNA replication protein 2 (cdc6-2) of Sulfurisphaera tokodaii (strain DSM 16993 / JCM 10545 / NBRC 100140 / 7) (Sulfolobus tokodaii).